Consider the following 223-residue polypeptide: Pleckstrin homology domain-containing family B member 1 (223 aa).

The region spanning 2-109 is the PH domain; that stretch reads ALVRGGWLWR…WKTALMEANS (108 aa).

In terms of assembly, homodimer. Interacts (via PH domain) with MYO1C. Interacts (via PH domain) with MYO7A. Binds transducins. In terms of tissue distribution, highly expressed in photoreceptor cells, oligodendrocytes and throughout the myelinated parts of the central nervous system. Detected in brain, liver, kidney, spleen and trachea.

The protein localises to the membrane. The protein resides in the cytoplasm. The protein is Pleckstrin homology domain-containing family B member 1 (Plekhb1) of Rattus norvegicus (Rat).